The chain runs to 269 residues: Putative ankyrin repeat protein L23 (269 aa).

ANK repeat units follow at residues 118-147 (EDDYAVKWASKNGHLKVVEYLVSLGADIKS), 148-177 (DGDYAVRWASENGHIDVVKYLVSQNADIRA), 179-207 (NDYAVKWASSNGHLEVVKYLVSQGANIRE), 208-237 (QNDYAIRLASQYGHLEVVKYLISLGADIRA), and 238-267 (DNDCAVRLASENGHIEIVNYLISQGADIRA).

The protein is Putative ankyrin repeat protein L23 of Acanthamoeba polyphaga (Amoeba).